Here is a 409-residue protein sequence, read N- to C-terminus: Autophagy-related protein 37 (409 aa).

Residues 1–313 (MSESIDRVFV…LKLIKTVIKH (313 aa)) lie on the Cytoplasmic side of the membrane. The 99-residue stretch at 5 to 103 (IDRVFVKAIG…LIDTMKQFAS (99 aa)) folds into the ACB domain. The helical transmembrane segment at 314–334 (VAIDAVIIAVLVAVIKRSIII) threads the bilayer. At 335–409 (PNLISNEISL…VSRIRLIKRN (75 aa)) the chain is on the peroxisomal side.

The protein belongs to the ATG37 family. In terms of assembly, interacts with ATG30 and PEX3. Post-translationally, phosphorylated.

The protein localises to the peroxisome membrane. Functionally, acyl-CoA binding protein which acts as the peroxisome receptor for pexophagy. Required for both micropexophagy and macropexophagy, but not for the cytoplasm to vacuole transport (Cvt) or autophagy pathways. Required for functional micropexophagic apparatus (MIPA) and relocation of ATG11 to the peroxisome-sequestering arms of the vacuole. Binds palmitoyl-CoA but not oleyl-CoA. The polypeptide is Autophagy-related protein 37 (Komagataella phaffii (strain GS115 / ATCC 20864) (Yeast)).